Here is a 151-residue protein sequence, read N- to C-terminus: Prefoldin subunit alpha (151 aa).

The protein belongs to the prefoldin subunit alpha family. As to quaternary structure, heterohexamer of two alpha and four beta subunits.

It localises to the cytoplasm. Functionally, molecular chaperone capable of stabilizing a range of proteins. Seems to fulfill an ATP-independent, HSP70-like function in archaeal de novo protein folding. The sequence is that of Prefoldin subunit alpha from Sulfurisphaera tokodaii (strain DSM 16993 / JCM 10545 / NBRC 100140 / 7) (Sulfolobus tokodaii).